The primary structure comprises 40 residues: Photosystem II reaction center protein J (40 aa).

A helical membrane pass occupies residues 8 to 28 (IPLWIIGTVTGIPVIGLIGIF).

Belongs to the PsbJ family. In terms of assembly, PSII is composed of 1 copy each of membrane proteins PsbA, PsbB, PsbC, PsbD, PsbE, PsbF, PsbH, PsbI, PsbJ, PsbK, PsbL, PsbM, PsbT, PsbX, PsbY, PsbZ, Psb30/Ycf12, at least 3 peripheral proteins of the oxygen-evolving complex and a large number of cofactors. It forms dimeric complexes.

It localises to the plastid. The protein localises to the chloroplast thylakoid membrane. In terms of biological role, one of the components of the core complex of photosystem II (PSII). PSII is a light-driven water:plastoquinone oxidoreductase that uses light energy to abstract electrons from H(2)O, generating O(2) and a proton gradient subsequently used for ATP formation. It consists of a core antenna complex that captures photons, and an electron transfer chain that converts photonic excitation into a charge separation. The polypeptide is Photosystem II reaction center protein J (Citrus sinensis (Sweet orange)).